A 453-amino-acid chain; its full sequence is Cysteine--tRNA ligase (453 aa).

Position 31 (C31) interacts with Zn(2+). The 'HIGH' region motif lies at 33–43 (PTVYDNPHIGN). Zn(2+) contacts are provided by C213, H238, and E242. The 'KMSKS' region motif lies at 271-275 (KMAKS). K274 is a binding site for ATP.

The protein belongs to the class-I aminoacyl-tRNA synthetase family. Monomer. It depends on Zn(2+) as a cofactor.

The protein localises to the cytoplasm. It carries out the reaction tRNA(Cys) + L-cysteine + ATP = L-cysteinyl-tRNA(Cys) + AMP + diphosphate. This is Cysteine--tRNA ligase from Pelagibacter ubique (strain HTCC1062).